Here is a 367-residue protein sequence, read N- to C-terminus: Inactive serine protease 39 (367 aa).

The signal sequence occupies residues 1 to 31 (MWGSRAQQSGPDRGGACLLAAFLLCFSLLHA). The region spanning 68–312 (IYGGQIAKAE…FSDWIKQKKA (245 aa)) is the Peptidase S1 domain. Cystine bridges form between Cys93–Cys109, Cys192–Cys269, Cys225–Cys248, and Cys259–Cys287.

Belongs to the peptidase S1 family. Expressed in testis. More specifically, abundantly expressed in the haploid round spermatid.

The protein resides in the cytoplasmic vesicle. It is found in the secretory vesicle. Its subcellular location is the acrosome. It localises to the secreted. May play an important role in the sperm/egg interaction; released during the acrosome reaction. The sequence is that of Inactive serine protease 39 (Prss39) from Mus musculus (Mouse).